The primary structure comprises 101 residues: Gamma-secretase subunit PEN-2 (101 aa).

The Cytoplasmic portion of the chain corresponds to 1 to 17 (MNLERVSNEEKLNLCRK). An intramembrane region (helical) is located at residues 18–36 (YYLGGFAFLPFLWLVNIFW). The Cytoplasmic segment spans residues 37–57 (FFREAFLVPAYTEQSQIKGYV). Residues 58 to 78 (WRSAVGFLFWVIVLTSWITIF) form a helical membrane-spanning segment. The Lumenal segment spans residues 79–101 (QIYRPRWGALGDYLSFTIPLGTP).

It belongs to the PEN-2 family. The functional gamma-secretase complex is composed of at least four polypeptides: a presenilin homodimer (PSEN1 or PSEN2), nicastrin (NCSTN), APH1 (APH1A or APH1B) and PSENEN. In terms of tissue distribution, widely expressed. Expressed in leukocytes, lung, placenta, small intestine, liver, kidney, spleen thymus, skeletal muscle, heart and brain.

It localises to the endoplasmic reticulum membrane. The protein localises to the golgi apparatus. Its subcellular location is the golgi stack membrane. The protein resides in the cell membrane. It is found in the membrane. Functionally, essential subunit of the gamma-secretase complex, an endoprotease complex that catalyzes the intramembrane cleavage of integral membrane proteins such as Notch receptors and APP (amyloid-beta precursor protein). The gamma-secretase complex plays a role in Notch and Wnt signaling cascades and regulation of downstream processes via its role in processing key regulatory proteins, and by regulating cytosolic CTNNB1 levels. PSENEN modulates both endoproteolysis of presenilin and gamma-secretase activity. The polypeptide is Gamma-secretase subunit PEN-2 (PSENEN) (Homo sapiens (Human)).